The sequence spans 92 residues: Small ribosomal subunit protein uS19 (92 aa).

Residues 1–27 (MARSIKKGPFADDHLKKKVEAQSGSEK) are disordered. A compositionally biased stretch (basic and acidic residues) spans 9–27 (PFADDHLKKKVEAQSGSEK).

Belongs to the universal ribosomal protein uS19 family.

In terms of biological role, protein S19 forms a complex with S13 that binds strongly to the 16S ribosomal RNA. This Staphylococcus saprophyticus subsp. saprophyticus (strain ATCC 15305 / DSM 20229 / NCIMB 8711 / NCTC 7292 / S-41) protein is Small ribosomal subunit protein uS19.